A 606-amino-acid chain; its full sequence is Zinc finger protein 214 (606 aa).

The KRAB domain occupies 3-83 (VTFEDVTIIF…GAQMYENQNY (81 aa)). The segment at 275–297 (YGCDEVDGNFHQSSGVHFHQRVH) adopts a C2H2-type 1; degenerate zinc-finger fold. A C2H2-type 2 zinc finger spans residues 303–325 (YSCNACGKSFSQISSLHNHQRVH). The C2H2-type 3; degenerate zinc finger occupies 330–352 (FYKIECDKDLSRNSLLHIHQRLH). 8 C2H2-type zinc fingers span residues 358 to 380 (FKCN…QRVH), 386 to 408 (YKCD…QLVH), 414 to 436 (YKCE…QRVH), 442 to 464 (YKCD…QRVH), 470 to 492 (YTCP…QRVH), 498 to 520 (YKCE…QRVH), 526 to 548 (YKCH…QRVH), and 554 to 576 (YQCA…QRVH).

It belongs to the krueppel C2H2-type zinc-finger protein family.

The protein resides in the nucleus. In terms of biological role, may be involved in transcriptional regulation. This Homo sapiens (Human) protein is Zinc finger protein 214 (ZNF214).